The sequence spans 498 residues: MRINPTTSGLGVSTLVEKNQGRIAQIIGPVLDVAFPPGKMPNIYNSLVVKGRDTAGQEINVTCEVQQLLGNNRVRAVAMSATDGLTRGMEVIDTGAPLSVPVGGATLGRIFNVLGEPVDNLGPVDTRTTSPIHRAAPAFTQLDTKLSIFETGIKVVDLLAPYRRGGKIGLFGGAGVGKTVLIMELINNIAKAHGGVSVFGGVGERTREGNDLYMEMKESGVINEENIAESKVALVYGQMNEPPGARMRVGLTALTMAEYFRDVNEQDVLLFIDNIFRFVQAGSEVSALLGRMPSAVGYQPTLSTEMGSLQERITSTKEGSITSIQAVYVPADDLTDPAPATTFAHLDATTVLSRGLAAKGIYPAVDPLDSTSTMLQPRIVGEEHYETAQRVKQTLQRYKELQDIIAILGLDELSEEDRLTVARARKIERFLSQPFFVAEVFTGSPGKYVGLAETIRGFQLILSGELDSFPEQAFYLVGNIDEATAKAMNLEVESKLKK.

172–179 (GGAGVGKT) contributes to the ATP binding site.

The protein belongs to the ATPase alpha/beta chains family. F-type ATPases have 2 components, CF(1) - the catalytic core - and CF(0) - the membrane proton channel. CF(1) has five subunits: alpha(3), beta(3), gamma(1), delta(1), epsilon(1). CF(0) has four main subunits: a(1), b(1), b'(1) and c(9-12).

The protein localises to the plastid. The protein resides in the chloroplast thylakoid membrane. The enzyme catalyses ATP + H2O + 4 H(+)(in) = ADP + phosphate + 5 H(+)(out). In terms of biological role, produces ATP from ADP in the presence of a proton gradient across the membrane. The catalytic sites are hosted primarily by the beta subunits. This chain is ATP synthase subunit beta, chloroplastic, found in Nymphaea alba (White water-lily).